The sequence spans 313 residues: Dioxygenase swnH2 (313 aa).

Fe cation contacts are provided by His-155, Asp-157, and His-232.

Belongs to the PhyH family. As to quaternary structure, homodimer. The cofactor is Fe cation.

It participates in mycotoxin biosynthesis. Its function is as follows. Aminotransferase; part of the gene cluster that mediates the biosynthesis of swainsonine (SW), a cytotoxic fungal alkaloid and a potential cancer therapy drug. Swainsonine production occurs via a multibranched pathway and is dispensable for fungal colonization of plants and infection of insect hosts. The first step of swainsonine biosynthesis is the production of the precursor pipecolic acid (PA) via conversion of L-lysine (Lys) to 1-piperideine-6-carboxylate (P6C) by the aminotransferase swnA, the latter being further reduced to PA by the reductase swnR. The PKS-NRPS hybrid synthetase swnK uptakes and condensates PA and malonyl-CoA with and without skipping of the ketoreductase (KR) domain in order to produce 3 intermediates, 1-oxoindolizidine, (1S)-1-hydroxyindolizin, and (1R)-1-hydroxyindolizine; with the transisomer (1S)-1-hydroxyindolizin being predominant. The terminal thioester reductase (TE) domain of swnK is involved in reduction of the thioester bond to release the intermediate aldehydes. The oxidoreductase swnN could contribute to the reduction of 1-oxoindolizidine to (1S)-1-hydroxyindolizin and (1R)-1-hydroxyindolizine, contributing to the major route of SW production. The dioxygenase swnH2 would be responsible for the oxidization of (1R)-1-hydroxyindolizine into (1R,2S)-1,2-dihydroxyindolizine and of (1S)-1-hydroxyindolizin to yield both (1R,2S)-1,2-dihydroxyindolizine and (1S,2S)-1,2-dihydroxyindolizine. The dioxygenase swnH1 then performs the conversion of the 1,2-dihydroxyindolizine epimers to SW. The protein is Dioxygenase swnH2 of Arthroderma benhamiae (strain ATCC MYA-4681 / CBS 112371) (Trichophyton mentagrophytes).